We begin with the raw amino-acid sequence, 529 residues long: Peptide chain release factor 3 (529 aa).

The region spanning Glu7–Arg275 is the tr-type G domain. Residues Ser16–Thr23, Asp84–His88, and Asn138–Asp141 each bind GTP.

It belongs to the TRAFAC class translation factor GTPase superfamily. Classic translation factor GTPase family. PrfC subfamily.

It is found in the cytoplasm. Increases the formation of ribosomal termination complexes and stimulates activities of RF-1 and RF-2. It binds guanine nucleotides and has strong preference for UGA stop codons. It may interact directly with the ribosome. The stimulation of RF-1 and RF-2 is significantly reduced by GTP and GDP, but not by GMP. This is Peptide chain release factor 3 from Syntrophus aciditrophicus (strain SB).